A 360-amino-acid polypeptide reads, in one-letter code: Olfactory receptor 1L1 (360 aa).

Residues 1–75 (MERNHNPDNC…GLSSRPEDQK (75 aa)) lie on the Extracellular side of the membrane. The N-linked (GlcNAc...) asparagine glycan is linked to Asn55. Residues 76 to 99 (PLFAVFLPIYLITVIGNLLIILAI) traverse the membrane as a helical segment. Residues 100–107 (RSDTRLQT) are Cytoplasmic-facing. The helical transmembrane segment at 108-129 (PMYFFLSILSFVDICYVTVIIP) threads the bilayer. Residues 130 to 150 (KMLVNFLSETKTISYSECLTQ) lie on the Extracellular side of the membrane. Cysteines 147 and 239 form a disulfide. A helical membrane pass occupies residues 151–170 (MYFFLAFGNTDSYLLAAMAI). Residues 171–189 (DRYVAICNPFHYITIMSHR) are Cytoplasmic-facing. Residues 190-208 (CCVLLLVLSFCIPHFHSLL) form a helical membrane-spanning segment. At 209 to 246 (HILLTNQLIFCASNVIHHFFCDDQPVLKLSCSSHFVKE) the chain is on the extracellular side. Residues 247 to 269 (ITVMTEGLAVIMTPFSCIIISYL) form a helical membrane-spanning segment. The Cytoplasmic segment spans residues 270-286 (RILITVLKIPSAAGKRK). The helical transmembrane segment at 287 to 309 (AFSTCGSHLTVVTLFYGSISYLY) threads the bilayer. The Extracellular portion of the chain corresponds to 310 to 321 (FQPLSNYTVKDQ). N-linked (GlcNAc...) asparagine glycosylation occurs at Asn315. A helical transmembrane segment spans residues 322 to 341 (IATIIYTVLTPMLNPFIYSL). At 342–360 (RNKDMKQGLAKLMHRMKCQ) the chain is on the cytoplasmic side.

It belongs to the G-protein coupled receptor 1 family.

Its subcellular location is the cell membrane. Odorant receptor. This chain is Olfactory receptor 1L1 (OR1L1), found in Homo sapiens (Human).